A 72-amino-acid polypeptide reads, in one-letter code: U10-myrmicitoxin-Tb1a (72 aa).

The first 26 residues, 1–26, serve as a signal peptide directing secretion; sequence MRVSYLSLTLTIVVVIAIIYAPETEA. A propeptide spanning residues 27 to 36 is cleaved from the precursor; the sequence is KAWADADAEA.

This sequence belongs to the formicidae venom precursor-01 superfamily. As to expression, expressed by the venom gland.

The protein localises to the secreted. In vivo, this neurotoxin paralyzes about 40% of blowflies (L.caesar) one hour after intrathoracic injection, when tested at high doses (28 nmol/g). This chain is U10-myrmicitoxin-Tb1a, found in Tetramorium bicarinatum (Tramp ant).